The following is a 216-amino-acid chain: Glycerol-3-phosphate acyltransferase (216 aa).

Helical transmembrane passes span 4 to 24, 56 to 76, 80 to 100, 112 to 132, and 138 to 158; these read IALG…AILV, VAVL…AYLL, PLYL…PVFF, FGAI…TWLL, and GYSS…VWWF.

The protein belongs to the PlsY family. As to quaternary structure, probably interacts with PlsX.

Its subcellular location is the cell inner membrane. The enzyme catalyses an acyl phosphate + sn-glycerol 3-phosphate = a 1-acyl-sn-glycero-3-phosphate + phosphate. Its pathway is lipid metabolism; phospholipid metabolism. Functionally, catalyzes the transfer of an acyl group from acyl-phosphate (acyl-PO(4)) to glycerol-3-phosphate (G3P) to form lysophosphatidic acid (LPA). This enzyme utilizes acyl-phosphate as fatty acyl donor, but not acyl-CoA or acyl-ACP. This chain is Glycerol-3-phosphate acyltransferase, found in Yersinia pseudotuberculosis serotype O:1b (strain IP 31758).